The sequence spans 244 residues: Ribonuclease 3 (244 aa).

One can recognise an RNase III domain in the interval 17 to 146 (FEKKMQELNL…FVGALYLDQG (130 aa)). Glu-59 contributes to the Mg(2+) binding site. Residue Asp-63 is part of the active site. Mg(2+)-binding residues include Asp-132 and Glu-135. The active site involves Glu-135. Positions 172 to 241 (DFKTQFQEYV…AERAYKILKN (70 aa)) constitute a DRBM domain.

The protein belongs to the ribonuclease III family. Homodimer. Mg(2+) serves as cofactor.

It is found in the cytoplasm. It carries out the reaction Endonucleolytic cleavage to 5'-phosphomonoester.. Its function is as follows. Digests double-stranded RNA. Involved in the processing of primary rRNA transcript to yield the immediate precursors to the large and small rRNAs (23S and 16S). Processes some mRNAs, and tRNAs when they are encoded in the rRNA operon. Processes pre-crRNA and tracrRNA of type II CRISPR loci if present in the organism. The chain is Ribonuclease 3 from Staphylococcus saprophyticus subsp. saprophyticus (strain ATCC 15305 / DSM 20229 / NCIMB 8711 / NCTC 7292 / S-41).